Reading from the N-terminus, the 94-residue chain is Co-chaperonin GroES (94 aa).

This sequence belongs to the GroES chaperonin family. As to quaternary structure, heptamer of 7 subunits arranged in a ring. Interacts with the chaperonin GroEL.

The protein localises to the cytoplasm. Its function is as follows. Together with the chaperonin GroEL, plays an essential role in assisting protein folding. The GroEL-GroES system forms a nano-cage that allows encapsulation of the non-native substrate proteins and provides a physical environment optimized to promote and accelerate protein folding. GroES binds to the apical surface of the GroEL ring, thereby capping the opening of the GroEL channel. The polypeptide is Co-chaperonin GroES (Lactococcus lactis subsp. cremoris (strain SK11)).